Reading from the N-terminus, the 427-residue chain is Glutamyl-tRNA(Gln) amidotransferase subunit D (427 aa).

In terms of domain architecture, Asparaginase/glutaminase spans 74–407 (ERVYIIGAGG…EVVRKMFQRN (334 aa)). Residues threonine 84, threonine 160, aspartate 161, and lysine 240 contribute to the active site.

This sequence belongs to the asparaginase 1 family. GatD subfamily. Heterodimer of GatD and GatE.

The catalysed reaction is L-glutamyl-tRNA(Gln) + L-glutamine + ATP + H2O = L-glutaminyl-tRNA(Gln) + L-glutamate + ADP + phosphate + H(+). In terms of biological role, allows the formation of correctly charged Gln-tRNA(Gln) through the transamidation of misacylated Glu-tRNA(Gln) in organisms which lack glutaminyl-tRNA synthetase. The reaction takes place in the presence of glutamine and ATP through an activated gamma-phospho-Glu-tRNA(Gln). The GatDE system is specific for glutamate and does not act on aspartate. This Aeropyrum pernix (strain ATCC 700893 / DSM 11879 / JCM 9820 / NBRC 100138 / K1) protein is Glutamyl-tRNA(Gln) amidotransferase subunit D.